The sequence spans 286 residues: Polyamine aminopropyltransferase (286 aa).

Residues 5–238 (PLWHETLHDH…GIMTFAWASD (234 aa)) enclose the PABS domain. Gln33 lines the S-methyl-5'-thioadenosine pocket. Spermidine is bound by residues His64 and Asp88. S-methyl-5'-thioadenosine is bound by residues Glu108 and 140–141 (DG). Residue Asp158 is the Proton acceptor of the active site. 158-161 (DCTD) is a binding site for spermidine. Position 165 (Pro165) interacts with S-methyl-5'-thioadenosine.

This sequence belongs to the spermidine/spermine synthase family. In terms of assembly, homodimer or homotetramer.

It localises to the cytoplasm. The enzyme catalyses S-adenosyl 3-(methylsulfanyl)propylamine + putrescine = S-methyl-5'-thioadenosine + spermidine + H(+). It functions in the pathway amine and polyamine biosynthesis; spermidine biosynthesis; spermidine from putrescine: step 1/1. Functionally, catalyzes the irreversible transfer of a propylamine group from the amino donor S-adenosylmethioninamine (decarboxy-AdoMet) to putrescine (1,4-diaminobutane) to yield spermidine. In Klebsiella pneumoniae subsp. pneumoniae (strain ATCC 700721 / MGH 78578), this protein is Polyamine aminopropyltransferase.